Here is a 950-residue protein sequence, read N- to C-terminus: UPF0182 protein P9303_14611 (950 aa).

9 helical membrane passes run 20–40, 53–73, 102–122, 141–161, 173–193, 209–229, 259–279, 308–328, and 335–355; these read LLLS…WLWF, WLWQ…CQLW, LLGC…LAWL, IWAL…MLGN, CFCF…ALAI, FGLG…AQLV, CDVM…LLWL, SLAS…PWIQ, and LIAS…APFV.

Belongs to the UPF0182 family.

The protein resides in the cell membrane. The chain is UPF0182 protein P9303_14611 from Prochlorococcus marinus (strain MIT 9303).